Reading from the N-terminus, the 158-residue chain is Style cell-cycle inhibitor 1-B (158 aa).

Composition is skewed to basic and acidic residues over residues 1–11 (MGSDKKTTEEK) and 22–47 (PRDE…DKSK). Residues 1 to 88 (MGSDKKTTEE…DKSKNKFEEL (88 aa)) are disordered. Basic residues-rich tracts occupy residues 48 to 58 (KEKHKSHKSKC) and 67 to 81 (GEKH…KDKS).

In terms of tissue distribution, specifically expressed in flowers pistils, especially in stigmas and styles. Barely detected in roots, stems, leaves, sepals, petals and stamen.

Its subcellular location is the nucleus. In terms of biological role, component of the auxin signaling transduction pathway that regulates cell proliferation and differentiation during flowers stigmas and styles development. Involved in the regulation of auxin-related genes. The protein is Style cell-cycle inhibitor 1-B of Nicotiana tabacum (Common tobacco).